The primary structure comprises 316 residues: MHPAILIHGPTASGKSALAIELARKLGGEVINADSMQVYSDLQVISARPTEEEMAGVPHHLFGYVDAGRRYSTGEWLESARSVLKRLQRQNKHAVIVGGTGLYLLALTQGLSDIPPVPEDIRAEVKAISESEGADGLRLRLAPHDPELAERLGTGDRQRLARAYEVWLATGRQLSEFQNERQPPVLKEGEWVGFALTPPRAALYKKIDRRFEGMLMQGAVAEARALVSRNLDPELPAMKALGMPSIAAFVRGEISAEEAAESAKRESRRYAKRQFTWIGRQFPFWPRIPSPEVSDRMRVIFALYREIDTADTEDYA.

9 to 16 (GPTASGKS) lines the ATP pocket. Residue 11–16 (TASGKS) coordinates substrate. Interaction with substrate tRNA stretches follow at residues 34–37 (DSMQ) and 158–162 (QRLAR).

It belongs to the IPP transferase family. In terms of assembly, monomer. It depends on Mg(2+) as a cofactor.

It catalyses the reaction adenosine(37) in tRNA + dimethylallyl diphosphate = N(6)-dimethylallyladenosine(37) in tRNA + diphosphate. In terms of biological role, catalyzes the transfer of a dimethylallyl group onto the adenine at position 37 in tRNAs that read codons beginning with uridine, leading to the formation of N6-(dimethylallyl)adenosine (i(6)A). This is tRNA dimethylallyltransferase from Hyphomonas neptunium (strain ATCC 15444).